The sequence spans 706 residues: Fatty acid oxidation complex subunit alpha (706 aa).

An enoyl-CoA hydratase region spans residues 1–188; sequence MEKTFNLTRR…KMGLVNDVVP (188 aa). The 3-hydroxyacyl-CoA dehydrogenase stretch occupies residues 308 to 706; sequence RKVKKAVILG…TMARENVSFF (399 aa).

The protein in the N-terminal section; belongs to the enoyl-CoA hydratase/isomerase family. This sequence in the central section; belongs to the 3-hydroxyacyl-CoA dehydrogenase family. Heterotetramer of two alpha chains (FadJ) and two beta chains (FadI).

It localises to the cytoplasm. The catalysed reaction is a (3S)-3-hydroxyacyl-CoA = a (2E)-enoyl-CoA + H2O. The enzyme catalyses a 4-saturated-(3S)-3-hydroxyacyl-CoA = a (3E)-enoyl-CoA + H2O. It catalyses the reaction a (3S)-3-hydroxyacyl-CoA + NAD(+) = a 3-oxoacyl-CoA + NADH + H(+). It carries out the reaction (3S)-3-hydroxybutanoyl-CoA = (3R)-3-hydroxybutanoyl-CoA. Its pathway is lipid metabolism; fatty acid beta-oxidation. Functionally, catalyzes the formation of a hydroxyacyl-CoA by addition of water on enoyl-CoA. Also exhibits 3-hydroxyacyl-CoA epimerase and 3-hydroxyacyl-CoA dehydrogenase activities. The protein is Fatty acid oxidation complex subunit alpha of Shewanella sp. (strain W3-18-1).